The sequence spans 911 residues: Alpha-actinin-4 (911 aa).

The interval methionine 1–aspartate 30 is disordered. Residues methionine 1–serine 269 form an actin-binding region. The tract at residues glutamine 12–glycine 26 is interaction with VCL. Tyrosine 31 is modified (phosphotyrosine). Residues arginine 40–asparagine 61 are interaction with VCL. Calponin-homology (CH) domains are found at residues lysine 50 to alanine 154 and threonine 163 to serine 269. The short motif at leucine 84–leucine 88 is the LXXLL motif element. The tract at residues lysine 108 to leucine 126 is interaction with VCL. An N6-acetyllysine modification is found at lysine 114. The polyphosphoinositide (PIP2)-binding stretch occupies residues threonine 177 to tryptophan 192. Lysine 214 is subject to N6-acetyllysine. Phosphothreonine is present on threonine 249. Spectrin repeat units lie at residues histidine 293–asparagine 403, histidine 413–lysine 518, glutamine 528–glutamate 639, and histidine 649–asparagine 752. N6-acetyllysine occurs at positions 592 and 625. Serine 696 carries the phosphoserine modification. Positions tryptophan 736–leucine 911 are mediates interaction with MICALL2. EF-hand domains follow at residues glutamate 765 to aspartate 800 and glutamine 806 to aspartate 841. Position 778 (aspartate 778) interacts with Ca(2+). Lysine 779 is subject to N6-acetyllysine. 2 residues coordinate Ca(2+): aspartate 780 and glutamate 789. At lysine 859 the chain carries N6-acetyllysine. Serine 909 is subject to Phosphoserine.

The protein belongs to the alpha-actinin family. In terms of assembly, homodimer; antiparallel. Identified in a IGF2BP1-dependent mRNP granule complex containing untranslated mRNAs. Component of the CART complex, at least composed of ACTN4, HGS/HRS, MYO5B and TRIM3. Binds TRIM3 at the N-terminus. Interacts with MAGI1. Interacts with PDLIM2. Identified in a complex with CASK, IQGAP1, MAGI2, NPHS1, SPTAN1 and SPTBN1. Interacts with MICALL2 (preferentially in opened conformation); stimulated by RAB13 activation. Interacts with PPARG and RARA. Binds to VCL; this interaction triggers VCL conformational changes. Interacts with SEPTIN14. Interacts with IGSF8.

The protein resides in the nucleus. Its subcellular location is the cytoplasm. It localises to the cell junction. It is found in the cytoskeleton. The protein localises to the stress fiber. The protein resides in the perinuclear region. F-actin cross-linking protein which is thought to anchor actin to a variety of intracellular structures. This is a bundling protein. Probably involved in vesicular trafficking via its association with the CART complex. The CART complex is necessary for efficient transferrin receptor recycling but not for EGFR degradation. Involved in tight junction assembly in epithelial cells probably through interaction with MICALL2. Links MICALL2 to the actin cytoskeleton and recruits it to the tight junctions. May also function as a transcriptional coactivator, stimulating transcription mediated by the nuclear hormone receptors PPARG and RARA. Association with IGSF8 regulates the immune synapse formation and is required for efficient T-cell activation. This is Alpha-actinin-4 from Pongo abelii (Sumatran orangutan).